The following is a 644-amino-acid chain: Exoribonuclease 2 (644 aa).

Residues 189 to 516 (RQDLTALNFV…NHRLLKAVIK (328 aa)) enclose the RNB domain. The region spanning 561-643 (NTRFAAEIID…ETRSIIARPA (83 aa)) is the S1 motif domain.

The protein belongs to the RNR ribonuclease family. RNase II subfamily.

Its subcellular location is the cytoplasm. The catalysed reaction is Exonucleolytic cleavage in the 3'- to 5'-direction to yield nucleoside 5'-phosphates.. Functionally, involved in mRNA degradation. Hydrolyzes single-stranded polyribonucleotides processively in the 3' to 5' direction. This is Exoribonuclease 2 from Salmonella choleraesuis (strain SC-B67).